The sequence spans 241 residues: Anti-Pycsar protein Apyc1 (241 aa).

The beta-lactamase-like stretch occupies residues 17–215 (DNNNALLEQD…SVQKKTWLMH (199 aa)). Zn(2+) contacts are provided by H59, H61, D63, H64, H142, D162, and H215.

It belongs to the nuclease anti-Pycsar protein Apyc1 family. In terms of assembly, homodimer. Zn(2+) serves as cofactor.

The catalysed reaction is 3',5'-cyclic CMP + H2O = CMP + H(+). The enzyme catalyses 3',5'-cyclic UMP + H2O = UMP + H(+). Functionally, counteracts the endogenous Pycsar antiviral defense system. Phosphodiesterase that enables metal-dependent hydrolysis of host cyclic nucleotide Pycsar defense signals such as cCMP and cUMP. This chain is Anti-Pycsar protein Apyc1, found in Paenibacillus harenae.